Here is a 559-residue protein sequence, read N- to C-terminus: Dihydroxy-acid dehydratase 2 (559 aa).

Residue cysteine 53 coordinates [2Fe-2S] cluster. Aspartate 85 contacts Mg(2+). Cysteine 126 serves as a coordination point for [2Fe-2S] cluster. Mg(2+)-binding residues include aspartate 127 and lysine 128. Position 128 is an N6-carboxylysine (lysine 128). Cysteine 195 is a binding site for [2Fe-2S] cluster. Glutamate 446 lines the Mg(2+) pocket. Serine 472 functions as the Proton acceptor in the catalytic mechanism.

Belongs to the IlvD/Edd family. In terms of assembly, homodimer. It depends on [2Fe-2S] cluster as a cofactor. Mg(2+) serves as cofactor.

The enzyme catalyses (2R)-2,3-dihydroxy-3-methylbutanoate = 3-methyl-2-oxobutanoate + H2O. It catalyses the reaction (2R,3R)-2,3-dihydroxy-3-methylpentanoate = (S)-3-methyl-2-oxopentanoate + H2O. It functions in the pathway amino-acid biosynthesis; L-isoleucine biosynthesis; L-isoleucine from 2-oxobutanoate: step 3/4. The protein operates within amino-acid biosynthesis; L-valine biosynthesis; L-valine from pyruvate: step 3/4. Its function is as follows. Functions in the biosynthesis of branched-chain amino acids. Catalyzes the dehydration of (2R,3R)-2,3-dihydroxy-3-methylpentanoate (2,3-dihydroxy-3-methylvalerate) into 2-oxo-3-methylpentanoate (2-oxo-3-methylvalerate) and of (2R)-2,3-dihydroxy-3-methylbutanoate (2,3-dihydroxyisovalerate) into 2-oxo-3-methylbutanoate (2-oxoisovalerate), the penultimate precursor to L-isoleucine and L-valine, respectively. The protein is Dihydroxy-acid dehydratase 2 of Pseudoalteromonas translucida (strain TAC 125).